The following is a 725-amino-acid chain: Glutamine-dependent NAD(+) synthetase (725 aa).

In terms of domain architecture, CN hydrolase spans 4-274 (LKVATCNLNQ…VEVIISQVDL (271 aa)). Glu-44 functions as the Proton acceptor; for glutaminase activity in the catalytic mechanism. Lys-113 serves as the catalytic For glutaminase activity. The Nucleophile; for glutaminase activity role is filled by Cys-174. The ligase stretch occupies residues 324 to 709 (YHSPQEEIAF…FPEEEANSNK (386 aa)). 354–361 (PLSGGADS) serves as a coordination point for ATP. The active site involves Ser-356.

It in the C-terminal section; belongs to the NAD synthetase family.

It catalyses the reaction deamido-NAD(+) + L-glutamine + ATP + H2O = L-glutamate + AMP + diphosphate + NAD(+) + H(+). The protein operates within cofactor biosynthesis; NAD(+) biosynthesis; NAD(+) from deamido-NAD(+) (L-Gln route): step 1/1. The chain is Glutamine-dependent NAD(+) synthetase from Arabidopsis thaliana (Mouse-ear cress).